The following is a 182-amino-acid chain: Large ribosomal subunit protein uL22 (182 aa).

A disordered region spans residues 159–182; sequence AAAKPKATAKKATGEKSKAKTKAN.

It belongs to the universal ribosomal protein uL22 family. Part of the 50S ribosomal subunit.

In terms of biological role, this protein binds specifically to 23S rRNA; its binding is stimulated by other ribosomal proteins, e.g. L4, L17, and L20. It is important during the early stages of 50S assembly. It makes multiple contacts with different domains of the 23S rRNA in the assembled 50S subunit and ribosome. The globular domain of the protein is located near the polypeptide exit tunnel on the outside of the subunit, while an extended beta-hairpin is found that lines the wall of the exit tunnel in the center of the 70S ribosome. In Cytophaga hutchinsonii (strain ATCC 33406 / DSM 1761 / CIP 103989 / NBRC 15051 / NCIMB 9469 / D465), this protein is Large ribosomal subunit protein uL22.